A 254-amino-acid chain; its full sequence is Phosphate import ATP-binding protein PstB (254 aa).

Positions 7–249 (MVAESMSFYY…PREKQTEDYI (243 aa)) constitute an ABC transporter domain. 39–46 (GPSGCGKS) serves as a coordination point for ATP.

Belongs to the ABC transporter superfamily. Phosphate importer (TC 3.A.1.7) family. As to quaternary structure, the complex is composed of two ATP-binding proteins (PstB), two transmembrane proteins (PstC and PstA) and a solute-binding protein (PstS).

Its subcellular location is the cell inner membrane. The catalysed reaction is phosphate(out) + ATP + H2O = ADP + 2 phosphate(in) + H(+). Functionally, part of the ABC transporter complex PstSACB involved in phosphate import. Responsible for energy coupling to the transport system. The polypeptide is Phosphate import ATP-binding protein PstB (Chlorobium chlorochromatii (strain CaD3)).